Here is a 728-residue protein sequence, read N- to C-terminus: Catalase-peroxidase 1 (728 aa).

The tryptophyl-tyrosyl-methioninium (Trp-Tyr) (with M-244) cross-link spans Trp-91–Tyr-218. Residue His-92 is the Proton acceptor of the active site. A cross-link (tryptophyl-tyrosyl-methioninium (Tyr-Met) (with W-91)) is located at residues Tyr-218–Met-244. His-259 lines the heme b pocket.

It belongs to the peroxidase family. Peroxidase/catalase subfamily. As to quaternary structure, homodimer or homotetramer. Requires heme b as cofactor. In terms of processing, formation of the three residue Trp-Tyr-Met cross-link is important for the catalase, but not the peroxidase activity of the enzyme.

The catalysed reaction is H2O2 + AH2 = A + 2 H2O. It catalyses the reaction 2 H2O2 = O2 + 2 H2O. Functionally, bifunctional enzyme with both catalase and broad-spectrum peroxidase activity. The polypeptide is Catalase-peroxidase 1 (Burkholderia cenocepacia (strain HI2424)).